The chain runs to 938 residues: Collagen alpha-1(I) chain (938 aa).

Residues glycine 1–proline 938 are disordered. Proline 18, proline 21, proline 24, proline 33, proline 36, proline 39, proline 54, proline 69, proline 75, proline 84, and proline 90 each carry 4-hydroxyproline. The segment covering proline 26 to methionine 45 has biased composition (low complexity). Basic and acidic residues predominate over residues asparagine 57–glutamate 71. At lysine 93 the chain carries 5-hydroxylysine; alternate. Lysine 93 carries an O-linked (Gal...) hydroxylysine; alternate glycan. Residue serine 99 is modified to Phosphoserine. Residues aspartate 107–alanine 135 are compositionally biased toward low complexity. A 4-hydroxyproline mark is found at proline 117, proline 138, proline 147, proline 150, proline 177, proline 180, proline 192, proline 198, proline 207, proline 213, proline 216, and proline 231. Residues proline 137–phenylalanine 149 show a composition bias toward pro residues. Positions alanine 183–serine 222 are enriched in low complexity. At lysine 234 the chain carries 5-hydroxylysine. Proline 240, proline 243, proline 255, proline 264, proline 279, proline 285, proline 294, and proline 300 each carry 4-hydroxyproline. The segment covering glycine 289 to glycine 298 has biased composition (gly residues). A 5-hydroxylysine modification is found at lysine 309. 4-hydroxyproline is present on residues proline 314, proline 323, proline 329, proline 335, proline 344, proline 347, proline 356, proline 365, proline 371, proline 383, proline 392, proline 401, proline 404, proline 422, proline 439, proline 445, proline 451, proline 458, proline 464, proline 476, proline 485, proline 497, proline 503, proline 509, and proline 518. Over residues lysine 338–arginine 364 the composition is skewed to low complexity. The span at alanine 373–proline 392 shows a compositional bias: low complexity. At lysine 530 the chain carries 5-hydroxylysine. Proline 536, proline 551, and proline 557 each carry 4-hydroxyproline. The span at serine 563–alanine 577 shows a compositional bias: low complexity. Serine 566 bears the Phosphoserine mark. 4-hydroxyproline occurs at positions 578, 584, 587, 596, 602, 620, 629, and 638. Residues alanine 590–alanine 617 are compositionally biased toward low complexity. The segment covering proline 619–proline 631 has biased composition (pro residues). Lysine 641 carries the 5-hydroxylysine modification. Over residues serine 646–valine 662 the composition is skewed to low complexity. Proline 650 and proline 656 each carry 4-hydroxyproline. Proline 664 bears the 3-hydroxyproline mark. Proline 665, proline 674, proline 677, proline 693, proline 703, proline 712, proline 730, proline 739, proline 742, proline 748, proline 763, proline 769, proline 775, proline 784, and proline 790 each carry 4-hydroxyproline. The span at proline 762–alanine 772 shows a compositional bias: pro residues. Lysine 799 is subject to 5-hydroxylysine. Residues proline 807–valine 822 are compositionally biased toward pro residues. 4-hydroxyproline is present on residues proline 810, proline 813, and proline 816. Low complexity predominate over residues alanine 843 to proline 867. 4-hydroxyproline occurs at positions 871, 874, 892, and 907. Low complexity predominate over residues proline 874–proline 907. 3-hydroxyproline is present on proline 912. Proline 913 is modified (4-hydroxyproline). Pro residues predominate over residues valine 923 to proline 938. Proline 925 is modified (3-hydroxyproline). Proline 926 bears the 4-hydroxyproline mark. Proline 928 is modified (3-hydroxyproline). A 4-hydroxyproline modification is found at proline 929. Proline 931 carries the 3-hydroxyproline modification. 4-hydroxyproline occurs at positions 932, 935, and 938.

The protein belongs to the fibrillar collagen family. Trimers of one alpha 2(I) and two alpha 1(I) chains. Contains mostly 4-hydroxyproline. Proline residues at the third position of the tripeptide repeating unit (G-X-Y) are hydroxylated in some or all of the chains. Post-translationally, contains 3-hydroxyproline at a few sites. This modification occurs on the first proline residue in the sequence motif Gly-Pro-Hyp, where Hyp is 4-hydroxyproline. In terms of processing, lysine residues at the third position of the tripeptide repeating unit (G-X-Y) are 5-hydroxylated in some or all of the chains. O-glycosylated on hydroxylated lysine residues. The O-linked glycan consists of a Glc-Gal disaccharide. Expressed in bones.

It localises to the secreted. The protein localises to the extracellular space. It is found in the extracellular matrix. Its function is as follows. Type I collagen is a member of group I collagen (fibrillar forming collagen). The chain is Collagen alpha-1(I) chain from Megalonyx jeffersonii (Jefferson's ground sloth).